Consider the following 269-residue polypeptide: Cytochrome c oxidase subunit 3 (269 aa).

Transmembrane regions (helical) follow at residues 7 to 29 (GYLQ…TSFS), 51 to 71 (IILS…DIIA), 90 to 110 (GFLL…WAYL), 127 to 147 (VGID…ILLA), 167 to 187 (TLYG…FQFL), 205 to 225 (FYSL…MLVI), and 247 to 267 (ILYL…VYWW).

This sequence belongs to the cytochrome c oxidase subunit 3 family. Component of the cytochrome c oxidase (complex IV, CIV), a multisubunit enzyme composed of a catalytic core of 3 subunits and several supernumerary subunits. The complex exists as a monomer or a dimer and forms supercomplexes (SCs) in the inner mitochondrial membrane with ubiquinol-cytochrome c oxidoreductase (cytochrome b-c1 complex, complex III, CIII).

It is found in the mitochondrion inner membrane. It carries out the reaction 4 Fe(II)-[cytochrome c] + O2 + 8 H(+)(in) = 4 Fe(III)-[cytochrome c] + 2 H2O + 4 H(+)(out). Functionally, component of the cytochrome c oxidase, the last enzyme in the mitochondrial electron transport chain which drives oxidative phosphorylation. The respiratory chain contains 3 multisubunit complexes succinate dehydrogenase (complex II, CII), ubiquinol-cytochrome c oxidoreductase (cytochrome b-c1 complex, complex III, CIII) and cytochrome c oxidase (complex IV, CIV), that cooperate to transfer electrons derived from NADH and succinate to molecular oxygen, creating an electrochemical gradient over the inner membrane that drives transmembrane transport and the ATP synthase. Cytochrome c oxidase is the component of the respiratory chain that catalyzes the reduction of oxygen to water. Electrons originating from reduced cytochrome c in the intermembrane space (IMS) are transferred via the dinuclear copper A center (CU(A)) of subunit 2 and heme A of subunit 1 to the active site in subunit 1, a binuclear center (BNC) formed by heme A3 and copper B (CU(B)). The BNC reduces molecular oxygen to 2 water molecules using 4 electrons from cytochrome c in the IMS and 4 protons from the mitochondrial matrix. The chain is Cytochrome c oxidase subunit 3 (COX3) from Candida parapsilosis (Yeast).